A 252-amino-acid polypeptide reads, in one-letter code: Triosephosphate isomerase (252 aa).

Residue 10–12 (NWK) coordinates substrate. The Electrophile role is filled by His-96. Glu-168 (proton acceptor) is an active-site residue. Residues Gly-174, Ser-214, and 235–236 (GG) each bind substrate.

It belongs to the triosephosphate isomerase family. Homodimer.

The protein resides in the cytoplasm. The enzyme catalyses D-glyceraldehyde 3-phosphate = dihydroxyacetone phosphate. It participates in carbohydrate biosynthesis; gluconeogenesis. The protein operates within carbohydrate degradation; glycolysis; D-glyceraldehyde 3-phosphate from glycerone phosphate: step 1/1. In terms of biological role, involved in the gluconeogenesis. Catalyzes stereospecifically the conversion of dihydroxyacetone phosphate (DHAP) to D-glyceraldehyde-3-phosphate (G3P). The protein is Triosephosphate isomerase of Streptococcus thermophilus (strain CNRZ 1066).